Reading from the N-terminus, the 101-residue chain is uncharacterized protein (101 aa).

Positions 76–101 are disordered; that stretch reads KGNVTRRRKKTHLGNDDGKKEAQEKM. A compositionally biased stretch (basic and acidic residues) spans 88–101; the sequence is LGNDDGKKEAQEKM.

This is an uncharacterized protein from Homo sapiens (Human).